We begin with the raw amino-acid sequence, 184 residues long: Ribosome-recycling factor (184 aa).

It belongs to the RRF family.

Its subcellular location is the cytoplasm. Its function is as follows. Responsible for the release of ribosomes from messenger RNA at the termination of protein biosynthesis. May increase the efficiency of translation by recycling ribosomes from one round of translation to another. The polypeptide is Ribosome-recycling factor (Psychrobacter sp. (strain PRwf-1)).